We begin with the raw amino-acid sequence, 348 residues long: Aminotransferase atnJ (348 aa).

Arg79 provides a ligand contact to pyridoxal 5'-phosphate. An N6-(pyridoxal phosphate)lysine modification is found at Lys180. Glu216 contributes to the pyridoxal 5'-phosphate binding site.

The protein belongs to the class-IV pyridoxal-phosphate-dependent aminotransferase family. Pyridoxal 5'-phosphate is required as a cofactor.

Its pathway is secondary metabolite biosynthesis. Aminotransferase; part of the gene cluster that mediates the biosynthesis of aspercryptins, linear lipopeptides built from six amino acids including 2 highly unusual and nonproteogenic amino acids, 2-amino-octanoic acid (2aoa) and 2-amino-dodecanol (2adol). The core structure of aspercryptins is as follows: Ser/Ala-Thr-Ile/Val-2aoa-Asn-2adol. The first step of aspercryptin biosynthesis is the generation of the fatty acid precursors, octanoic and dodecanoic acids, by the FAS subunits atnF and atnM. The fatty acid precursors are likely transformed into the corresponding alpha-amino fatty acids in three steps. First, they are hydroxylated by the cytochrome P450 monooxygenase atnE, then oxidized to the corresponding alpha-keto acids by the NAD(P)-dependent oxidoreductase atnD, and finally converted to the alpha-amino fatty acids by the PLP-dependent aminotransferases atnH or atnJ. the alpha-amino fatty acids, 2-amino-octanoic and 2-amino-dodecanoic acids, are recognized, activated, and covalently tethered to the NRPS atnA by its fourth and sixth adenylation domains. The second module of atnA is the Thr module and contains an epimerase (E) domain responsible for the epimerization of Thr to D-allo-Thr. Additionally, despite atnA having only one epimerase domain, the first amino acid of aspercryptin A1 is D-Ser, suggesting that serine is either loaded directly as D-Ser on the first module or that the epimerase domain in the threonine module epimerizes both L-Ser and L-Thr. After condensation of the hexapeptide of aspercryptin, the C-terminal reductase (TE) domain might be involved in the reductive release and production of the aldehyde hexapeptide. Further reduction would generate aspercryptins. The variety of aspercryptins produced reflects the flexibility of the atnA NRPS, allowing incorporation of alanine instead of serine, valine for isoleucine, and a C10 fatty amino alcohol instead of the C12 version. AtnB seems to be involved in the selectivity for Ile versus Val by the third module. Moreover, type B, C and D aspercryptins have an additional N-terminal cichorine, acetyl and propionyl group respectively. In Emericella nidulans (strain FGSC A4 / ATCC 38163 / CBS 112.46 / NRRL 194 / M139) (Aspergillus nidulans), this protein is Aminotransferase atnJ.